Here is a 356-residue protein sequence, read N- to C-terminus: Glycerol-1-phosphate dehydrogenase [NAD(P)+] (356 aa).

Residues 103-107 and 125-128 each bind NAD(+); these read GRSID and TAAS. Asp130 is a binding site for substrate. Residue Ser134 coordinates NAD(+). A substrate-binding site is contributed by Asp177. Positions 177 and 257 each coordinate Zn(2+). His261 lines the substrate pocket. His273 is a binding site for Zn(2+).

This sequence belongs to the glycerol-1-phosphate dehydrogenase family. It depends on Zn(2+) as a cofactor.

The protein localises to the cytoplasm. It catalyses the reaction sn-glycerol 1-phosphate + NAD(+) = dihydroxyacetone phosphate + NADH + H(+). It carries out the reaction sn-glycerol 1-phosphate + NADP(+) = dihydroxyacetone phosphate + NADPH + H(+). Its pathway is membrane lipid metabolism; glycerophospholipid metabolism. Its function is as follows. Catalyzes the NAD(P)H-dependent reduction of dihydroxyacetonephosphate (DHAP or glycerone phosphate) to glycerol 1-phosphate (G1P). The G1P thus generated is used as the glycerophosphate backbone of phospholipids in the cellular membranes of Archaea. In Methanosarcina mazei (strain ATCC BAA-159 / DSM 3647 / Goe1 / Go1 / JCM 11833 / OCM 88) (Methanosarcina frisia), this protein is Glycerol-1-phosphate dehydrogenase [NAD(P)+].